Consider the following 336-residue polypeptide: MKVGIIGASGYTGGELLRLLVSHPDVRLELATSRSLAGKPVSSTHRHLTGFLDLKYENPVSEEIRERCDVVFVAVPHGTAMNYVPELLDGSTKVIDLSADYRLDTPVFENIYGIKHSDPRKAVYGLVELHPEAAREEFVANPGCFPTGANLAAAPLAAAGLIDIAVFDSKTGISGAGISPTETSHYPNIAENIIPYKLTAHRHRAEILQELTRLDGKLRNISFTPHVIPSIRGILTTAHLFTKEPLSTGDVQEIYEEFYRDKPFVRLPGGVPSLTAVRGSNFCDIGFEADKENNRVVVLSAIDNLVKGASGQAIQNMNLMFGLAETRGLWLPAAAP.

Residue C144 is part of the active site.

This sequence belongs to the NAGSA dehydrogenase family. Type 1 subfamily.

The protein resides in the cytoplasm. It catalyses the reaction N-acetyl-L-glutamate 5-semialdehyde + phosphate + NADP(+) = N-acetyl-L-glutamyl 5-phosphate + NADPH + H(+). Its pathway is amino-acid biosynthesis; L-arginine biosynthesis; N(2)-acetyl-L-ornithine from L-glutamate: step 3/4. Catalyzes the NADPH-dependent reduction of N-acetyl-5-glutamyl phosphate to yield N-acetyl-L-glutamate 5-semialdehyde. This is N-acetyl-gamma-glutamyl-phosphate reductase from Methanosarcina acetivorans (strain ATCC 35395 / DSM 2834 / JCM 12185 / C2A).